Reading from the N-terminus, the 166-residue chain is Interferon gamma (166 aa).

The signal sequence occupies residues 1 to 23 (MNYTTICLAFQLCVIFCSSGYYC). Gln24 carries the pyrrolidone carboxylic acid modification. N-linked (GlcNAc...) asparagine glycans are attached at residues Asn39, Asn106, and Asn107.

The protein belongs to the type II (or gamma) interferon family. Homodimer. Interacts with IFNGR1 (via extracellular domain); this interaction promotes IFNGR1 dimerization.

It is found in the secreted. Type II interferon produced by immune cells such as T-cells and NK cells that plays crucial roles in antimicrobial, antiviral, and antitumor responses by activating effector immune cells and enhancing antigen presentation. Primarily signals through the JAK-STAT pathway after interaction with its receptor IFNGR1 to affect gene regulation. Upon IFNG binding, IFNGR1 intracellular domain opens out to allow association of downstream signaling components JAK2, JAK1 and STAT1, leading to STAT1 activation, nuclear translocation and transcription of IFNG-regulated genes. Many of the induced genes are transcription factors such as IRF1 that are able to further drive regulation of a next wave of transcription. Plays a role in class I antigen presentation pathway by inducing a replacement of catalytic proteasome subunits with immunoproteasome subunits. In turn, increases the quantity, quality, and repertoire of peptides for class I MHC loading. Increases the efficiency of peptide generation also by inducing the expression of activator PA28 that associates with the proteasome and alters its proteolytic cleavage preference. Up-regulates as well MHC II complexes on the cell surface by promoting expression of several key molecules such as cathepsins B/CTSB, H/CTSH, and L/CTSL. Participates in the regulation of hematopoietic stem cells during development and under homeostatic conditions by affecting their development, quiescence, and differentiation. The chain is Interferon gamma (IFNG) from Mustela putorius furo (European domestic ferret).